The chain runs to 458 residues: Protein RICE SALT SENSITIVE 3 (458 aa).

The span at 1–17 shows a compositional bias: gly residues; that stretch reads MVGSGAAGGGGGGGGGG. Disordered regions lie at residues 1 to 21, 220 to 325, 354 to 374, and 386 to 458; these read MVGS…DHAR, TSPS…PEGD, GGGA…GHGG, and SHSN…TFLE. Residues 220 to 232 show a composition bias toward low complexity; sequence TSPSPSSFPLKQQ. The segment covering 245–262 has biased composition (pro residues); the sequence is HAPPQLPPGASPLFPPGP. A compositionally biased stretch (low complexity) spans 308 to 317; sequence QQPMAAPQQH. The span at 413 to 436 shows a compositional bias: low complexity; it reads SSSTTSTSPSVSASTAPAPPQQQQ.

In terms of assembly, interacts with BHLH094, BHLH089, TIFY11A/JAZ9 and TIFY11C/JAZ11. Forms a ternary complex with TIFY11A/JAZ9 and BHLH094 in the nucleus. Expressed in root tips. Expressed at high levels in the meristematic zone and at low levels in the elongation zone of the root tip.

It is found in the nucleus. It localises to the cytoplasm. Involved in the repression of jasmonate (JA)-induced genes. Forms a ternary complex with TIFY11A/JAZ9 and BHLH094 to negatively regulate JA-responsive genes. Involved in transcriptional regulation in the root tip. Plays a regulatory role in root cell elongation. Regulates root cell elongation during salt stress. The sequence is that of Protein RICE SALT SENSITIVE 3 from Oryza sativa subsp. japonica (Rice).